The chain runs to 427 residues: Glutamate-1-semialdehyde 2,1-aminomutase (427 aa).

N6-(pyridoxal phosphate)lysine is present on lysine 268.

It belongs to the class-III pyridoxal-phosphate-dependent aminotransferase family. HemL subfamily. It depends on pyridoxal 5'-phosphate as a cofactor.

Its subcellular location is the cytoplasm. The enzyme catalyses (S)-4-amino-5-oxopentanoate = 5-aminolevulinate. It functions in the pathway porphyrin-containing compound metabolism; protoporphyrin-IX biosynthesis; 5-aminolevulinate from L-glutamyl-tRNA(Glu): step 2/2. The polypeptide is Glutamate-1-semialdehyde 2,1-aminomutase (Methanococcus maripaludis (strain DSM 14266 / JCM 13030 / NBRC 101832 / S2 / LL)).